A 370-amino-acid polypeptide reads, in one-letter code: Subtilisin-like protease (370 aa).

Positions 1-17 are cleaved as a signal peptide; sequence MIASIVFFIVLVDGVAT. Catalysis depends on charge relay system residues D13, H35, and S190. The 244-residue stretch at 18–261 folds into the Peptidase S8 domain; sequence GSPNALVTDF…FGEVSPSRLE (244 aa). One can recognise a P/Homo B domain in the interval 240 to 370; the sequence is RVTDRWTHRN…TTEGTCHGIR (131 aa).

This sequence belongs to the peptidase S8 family.

In Ictalurid herpesvirus 1 (strain Auburn) (IcHV-1), this protein is Subtilisin-like protease (ORF47).